The primary structure comprises 604 residues: Glutamyl-tRNA(Gln) amidotransferase subunit B, mitochondrial (604 aa).

The N-terminal 48 residues, 1–48 (MIRQCLSRRGAYSRYRLAARGVELAEPFHHQSSRPQGRRNWSSSPRCS), are a transit peptide targeting the mitochondrion. The disordered stretch occupies residues 28 to 57 (FHHQSSRPQGRRNWSSSPRCSLDIRTDTPR). A compositionally biased stretch (polar residues) spans 33 to 46 (SRPQGRRNWSSSPR).

This sequence belongs to the GatB/GatE family. GatB subfamily. In terms of assembly, subunit of the heterotrimeric GatCAB amidotransferase (AdT) complex, composed of A, B and C subunits.

It localises to the mitochondrion. The catalysed reaction is L-glutamyl-tRNA(Gln) + L-glutamine + ATP + H2O = L-glutaminyl-tRNA(Gln) + L-glutamate + ADP + phosphate + H(+). Allows the formation of correctly charged Gln-tRNA(Gln) through the transamidation of misacylated Glu-tRNA(Gln) in the mitochondria. The reaction takes place in the presence of glutamine and ATP through an activated gamma-phospho-Glu-tRNA(Gln). The polypeptide is Glutamyl-tRNA(Gln) amidotransferase subunit B, mitochondrial (Blastomyces gilchristii (strain SLH14081) (Blastomyces dermatitidis)).